The chain runs to 472 residues: Lycopene beta cyclase, chloroplastic (472 aa).

The N-terminal 25 residues, 1 to 25 (MDALLTSPFIPLKKPSHNRKSNTTT), are a transit peptide targeting the chloroplast. The segment at 1–27 (MDALLTSPFIPLKKPSHNRKSNTTTAS) is disordered. 62–90 (LAVVGGGPAGLAVAKRVSDAGLSVCSIDP) provides a ligand contact to NAD(+).

The protein belongs to the lycopene cyclase family. In terms of tissue distribution, expressed in flower buds and lips. Detected in roots and leaves.

The protein localises to the plastid. It localises to the chloroplast. The enzyme catalyses a carotenoid psi-end group = a carotenoid beta-end derivative. The protein operates within carotenoid biosynthesis; beta-carotene biosynthesis. It functions in the pathway carotenoid biosynthesis; beta-zeacarotene biosynthesis. In terms of biological role, catalyzes the double cyclization reaction which converts lycopene to beta-carotene and neurosporene to beta-zeacarotene. The polypeptide is Lycopene beta cyclase, chloroplastic (LCY-B) (Oncidium hybrid cultivar (Orchid)).